Here is a 333-residue protein sequence, read N- to C-terminus: 4-hydroxythreonine-4-phosphate dehydrogenase (333 aa).

Residues His-136 and Thr-137 each coordinate substrate. The a divalent metal cation site is built by His-166, His-211, and His-266. 3 residues coordinate substrate: Lys-274, Asn-283, and Arg-292.

Belongs to the PdxA family. Homodimer. Requires Zn(2+) as cofactor. It depends on Mg(2+) as a cofactor. The cofactor is Co(2+).

Its subcellular location is the cytoplasm. The enzyme catalyses 4-(phosphooxy)-L-threonine + NAD(+) = 3-amino-2-oxopropyl phosphate + CO2 + NADH. It participates in cofactor biosynthesis; pyridoxine 5'-phosphate biosynthesis; pyridoxine 5'-phosphate from D-erythrose 4-phosphate: step 4/5. Functionally, catalyzes the NAD(P)-dependent oxidation of 4-(phosphooxy)-L-threonine (HTP) into 2-amino-3-oxo-4-(phosphooxy)butyric acid which spontaneously decarboxylates to form 3-amino-2-oxopropyl phosphate (AHAP). This Acidithiobacillus ferrooxidans (strain ATCC 23270 / DSM 14882 / CIP 104768 / NCIMB 8455) (Ferrobacillus ferrooxidans (strain ATCC 23270)) protein is 4-hydroxythreonine-4-phosphate dehydrogenase.